The following is a 226-amino-acid chain: Putative pyridoxamine 5'-phosphate oxidase (226 aa).

16-19 is a binding site for pyridoxal 5'-phosphate; the sequence is LNSH. 72–75 serves as a coordination point for FMN; that stretch reads RMVL. Lysine 77 is a binding site for pyridoxal 5'-phosphate. FMN contacts are provided by residues 87–88, 93–94, and glutamine 116; these read YT and RK. 3 residues coordinate pyridoxal 5'-phosphate: tyrosine 134, arginine 138, and serine 142. FMN contacts are provided by residues 151 to 152 and tryptophan 199; that span reads QS. 205–207 serves as a coordination point for pyridoxal 5'-phosphate; sequence RLH. Arginine 209 lines the FMN pocket.

Belongs to the pyridoxamine 5'-phosphate oxidase family. Homodimer. Requires FMN as cofactor.

The enzyme catalyses pyridoxamine 5'-phosphate + O2 + H2O = pyridoxal 5'-phosphate + H2O2 + NH4(+). It carries out the reaction pyridoxine 5'-phosphate + O2 = pyridoxal 5'-phosphate + H2O2. Its pathway is cofactor metabolism; pyridoxal 5'-phosphate salvage; pyridoxal 5'-phosphate from pyridoxamine 5'-phosphate: step 1/1. It participates in cofactor metabolism; pyridoxal 5'-phosphate salvage; pyridoxal 5'-phosphate from pyridoxine 5'-phosphate: step 1/1. Catalyzes the oxidation of either pyridoxine 5'-phosphate (PNP) or pyridoxamine 5'-phosphate (PMP) into pyridoxal 5'-phosphate (PLP). The protein is Putative pyridoxamine 5'-phosphate oxidase of Caenorhabditis elegans.